A 394-amino-acid chain; its full sequence is Putative 8-amino-7-oxononanoate synthase (394 aa).

Residue R23 coordinates substrate. 110 to 111 (GY) is a pyridoxal 5'-phosphate binding site. H135 contributes to the substrate binding site. Pyridoxal 5'-phosphate-binding positions include S182, 207–210 (DEAH), and 238–241 (TFSK). At K241 the chain carries N6-(pyridoxal phosphate)lysine. Residue T355 coordinates substrate.

The protein belongs to the class-II pyridoxal-phosphate-dependent aminotransferase family. BioF subfamily. As to quaternary structure, homodimer. Pyridoxal 5'-phosphate is required as a cofactor.

The enzyme catalyses 6-carboxyhexanoyl-[ACP] + L-alanine + H(+) = (8S)-8-amino-7-oxononanoate + holo-[ACP] + CO2. The protein operates within cofactor biosynthesis; biotin biosynthesis. Functionally, catalyzes the decarboxylative condensation of pimeloyl-[acyl-carrier protein] and L-alanine to produce 8-amino-7-oxononanoate (AON), [acyl-carrier protein], and carbon dioxide. This chain is Putative 8-amino-7-oxononanoate synthase (bioF), found in Bacillus cereus (strain Q1).